A 214-amino-acid polypeptide reads, in one-letter code: MAQAAGLPQASTASGQPYVSKLVLLGSSSVGKTSLALRYMKQDFSNVLPTVGCAFFTKVLDLGSSSLKLEIWDTAGQEKYQSVCHLYFRGANAALLVYDITRKDSFHKAQQWLEDLEKEFQPGEVVVMLVGNKTDLGEEREVTFQEGKEFAESKSLLFMETSAKLNYQVSEIFNTVAQELLQRAGDTGSSRPQEGEAVALNQEPPIRQRQCCAR.

Serine 29 bears the Phosphoserine mark. GTP contacts are provided by glycine 31, lysine 32, threonine 33, and threonine 50. The Mg(2+) site is built by threonine 33, threonine 50, and aspartate 73. The short motif at 43–54 (DFSNVLPTVGCA) is the Switch 1 element. The Switch 2 motif lies at 75-91 (AGQEKYQSVCHLYFRGA). GTP-binding residues include glycine 76, asparagine 132, lysine 133, aspartate 135, and alanine 163. Residues 183-204 (RAGDTGSSRPQEGEAVALNQEP) form a disordered region. Residues cysteine 211 and cysteine 212 are each lipidated (S-geranylgeranyl cysteine).

It belongs to the small GTPase superfamily. Rab family. Requires Mg(2+) as cofactor. As to expression, expressed in kidney, liver, and intestine mainly by epithelial cells. Expressed in hippocampus (at protein level).

Its subcellular location is the recycling endosome membrane. It localises to the melanosome. The protein resides in the cell projection. The protein localises to the dendrite. It catalyses the reaction GTP + H2O = GDP + phosphate + H(+). Regulated by guanine nucleotide exchange factors (GEFs) which promote the exchange of bound GDP for free GTP. Regulated by GTPase activating proteins (GAPs) which increase the GTP hydrolysis activity. Inhibited by GDP dissociation inhibitors (GDIs). Its function is as follows. The small GTPases Rab are key regulators of intracellular membrane trafficking, from the formation of transport vesicles to their fusion with membranes. Rabs cycle between an inactive GDP-bound form and an active GTP-bound form that is able to recruit to membranes different set of downstream effectors directly responsible for vesicle formation, movement, tethering and fusion. RAB17 is involved in transcytosis, the directed movement of endocytosed material through the cell and its exocytosis from the plasma membrane at the opposite side. Mainly observed in epithelial cells, transcytosis mediates, for instance, the transcellular transport of immunoglobulins from the basolateral surface to the apical surface. Most probably controls membrane trafficking through apical recycling endosomes in a post-endocytic step of transcytosis. Required for melanosome transport and release from melanocytes, it also regulates dendrite and dendritic spine development. May also play a role in cell migration. This chain is Ras-related protein Rab-17, found in Mus musculus (Mouse).